The chain runs to 337 residues: RNA 3'-terminal phosphate cyclase (337 aa).

Residues Gln101 and 282-285 (HMSD) contribute to the ATP site. The Tele-AMP-histidine intermediate role is filled by His306.

It belongs to the RNA 3'-terminal cyclase family. Type 1 subfamily.

Its subcellular location is the cytoplasm. It carries out the reaction a 3'-end 3'-phospho-ribonucleotide-RNA + ATP = a 3'-end 2',3'-cyclophospho-ribonucleotide-RNA + AMP + diphosphate. Catalyzes the conversion of 3'-phosphate to a 2',3'-cyclic phosphodiester at the end of RNA. The mechanism of action of the enzyme occurs in 3 steps: (A) adenylation of the enzyme by ATP; (B) transfer of adenylate to an RNA-N3'P to produce RNA-N3'PP5'A; (C) and attack of the adjacent 2'-hydroxyl on the 3'-phosphorus in the diester linkage to produce the cyclic end product. The biological role of this enzyme is unknown but it is likely to function in some aspects of cellular RNA processing. This is RNA 3'-terminal phosphate cyclase from Saccharolobus islandicus (strain M.16.4 / Kamchatka #3) (Sulfolobus islandicus).